A 915-amino-acid chain; its full sequence is Protein MEI2-like 1 (915 aa).

Positions 1–90 are disordered; that stretch reads MPSDIMEQRG…NTTNGSQWES (90 aa). Over residues 16-25 the composition is skewed to basic and acidic residues; it reads HFHEDIHITS. Positions 50-65 are enriched in polar residues; the sequence is MPKSSWTSESYQLKPQ. The span at 66–77 shows a compositional bias: low complexity; it reads SSFSGSHPSGSP. Ser-76 is modified (phosphoserine). Residues 78-89 are compositionally biased toward polar residues; the sequence is NARNTTNGSQWE. 2 consecutive RRM domains span residues 217–290 and 302–375; these read RTLL…YSIS and GALL…PTYP. 2 disordered regions span residues 690-723 and 854-915; these read PGRS…SSSN and LFHT…LKEN. The segment covering 705-723 has biased composition (basic and acidic residues); it reads PNERYRNLSHRRSESSSSN. The span at 882–898 shows a compositional bias: polar residues; that stretch reads RSSSIDNYNSFSISSVS.

Expressed in roots, shoots, leaves, flowers and siliques.

Probable RNA-binding transcriptional activator that plays a role in meiosis and vegetative growth. May be a downstream effector of TOR signaling pathway and recruited by RAPTOR1 for TOR substrate. The sequence is that of Protein MEI2-like 1 (ML1) from Arabidopsis thaliana (Mouse-ear cress).